The following is an 86-amino-acid chain: UPF0367 protein PMN2A_1492 (86 aa).

This sequence belongs to the UPF0367 family.

In Prochlorococcus marinus (strain NATL2A), this protein is UPF0367 protein PMN2A_1492.